The sequence spans 421 residues: Hydrolyase poxO (421 aa).

Ser-239 serves as the catalytic Nucleophile.

It belongs to the AB hydrolase superfamily. FUS2 hydrolase family. As to quaternary structure, homodimer.

It participates in secondary metabolite biosynthesis. In terms of biological role, hydrolyase; part of the gene cluster that mediates the biosynthesis of oxaleimides, cytotoxic compounds containing an unusual disubstituted succinimide moiety. The first step of the pathway is provided by the HR-PKS poxF that serves in a new mode of collaborative biosynthesis with the PKS-NRPS poxE, by providing the olefin containing amino acid substrate via the synthesis of an ACP-bound dec-4-enoate. The cytochrome P450 monooxygenase poxM-catalyzed oxidation at the alpha-position creates the enzyme-bound 2-hydroxydec-4-enoyl-ACP thioester, which may be prone to spontaneous hydrolysis to yield 2-hydroxydec-4-enoic acid due to increased electrophilicity of the carbonyl. 2-hydroxydec-4-enoic acid can then be further oxidized by poxM to yield the alpha-ketoacid 2-oxodec-4-enoicacid, which is reductively aminated by the aminotransferase poxL to yield (S,E)-2-aminodec-4-enoic acid. The Hybrid PKS-NRPS synthetase poxE then performs condensation between the octaketide product of its PKS modules and the amino group of (S,E)-2-aminodec-4-enoic acid which is activated and incorporated by the adenylation domain. The resulting aminoacyl product can be cyclized by the Diels-Alderase PoxQ and reductively released by the reductive (R) domain of poxE to yield an aldehyde intermediate. The released aldehyde is then substrate for a Knoevenagel condensation by the hydrolyase poxO followed by an oxidation at the 5-position of the pyrrolidone ring. The presence of the olefin from the amino acid building block allows for migration of the substituted allyl group to occur. This allylic transposition reaction takes place in a conjugate addition, semipinacol-like fashion to yield a succinimide intermediate. Iterative two-electron oxidations of the C7 methyl of the succinimide intermediate to the carboxylic acid can be catalyzed by one of two remaining cytochrome P450 monooxygenasess poxC or poxD to yield oxaleimide A. Subsequent oxidation yields the maleimide scaffold oxaleimide I. Both oxaleimide A and oxaleimide I can undergo oxidative modifications in the decalin ring to yield the series of products oxaleimides B to H. This Penicillium oxalicum (strain 114-2 / CGMCC 5302) (Penicillium decumbens) protein is Hydrolyase poxO.